The primary structure comprises 527 residues: Probable pectinesterase/pectinesterase inhibitor 32 (527 aa).

The first 24 residues, 1 to 24 (MAKFRQMGSSIFFLFLIIISLCSA), serve as a signal peptide directing secretion. The pectinesterase inhibitor 32 stretch occupies residues 25 to 165 (HKEAFSSTDL…GTTVRNLLTM (141 aa)). Asparagine 110, asparagine 209, asparagine 224, and asparagine 280 each carry an N-linked (GlcNAc...) asparagine glycan. A pectinesterase 32 region spans residues 214-511 (DAVVAADGTG…FTVSQLIQGN (298 aa)). The substrate site is built by threonine 289 and glutamine 319. Catalysis depends on aspartate 342, which acts as the Proton donor; for pectinesterase activity. An intrachain disulfide couples cysteine 356 to cysteine 376. The Nucleophile; for pectinesterase activity role is filled by aspartate 363. Asparagine 423 carries an N-linked (GlcNAc...) asparagine glycan. Positions 431 and 433 each coordinate substrate. Asparagine 494 and asparagine 501 each carry an N-linked (GlcNAc...) asparagine glycan.

It in the N-terminal section; belongs to the PMEI family. The protein in the C-terminal section; belongs to the pectinesterase family. Expressed in siliques.

The protein localises to the secreted. It is found in the cell wall. The catalysed reaction is [(1-&gt;4)-alpha-D-galacturonosyl methyl ester](n) + n H2O = [(1-&gt;4)-alpha-D-galacturonosyl](n) + n methanol + n H(+). The protein operates within glycan metabolism; pectin degradation; 2-dehydro-3-deoxy-D-gluconate from pectin: step 1/5. Acts in the modification of cell walls via demethylesterification of cell wall pectin. The protein is Probable pectinesterase/pectinesterase inhibitor 32 (PME32) of Arabidopsis thaliana (Mouse-ear cress).